A 231-amino-acid polypeptide reads, in one-letter code: Isoprenyl transferase (231 aa).

Residue Asp-14 is part of the active site. Residue Asp-14 participates in Mg(2+) binding. Residues 15 to 18 (GNGR), Trp-19, Arg-27, His-31, and 59 to 61 (STE) contribute to the substrate site. Asn-62 functions as the Proton acceptor in the catalytic mechanism. Substrate is bound by residues Trp-63, Arg-65, Arg-176, and 182 to 184 (RIS). Glu-195 is a binding site for Mg(2+).

This sequence belongs to the UPP synthase family. Homodimer. Requires Mg(2+) as cofactor.

Its function is as follows. Catalyzes the condensation of isopentenyl diphosphate (IPP) with allylic pyrophosphates generating different type of terpenoids. This is Isoprenyl transferase from Aquifex pyrophilus.